The chain runs to 433 residues: Serine hydroxymethyltransferase (433 aa).

Residues Leu121 and 125 to 127 (GHI) each bind (6S)-5,6,7,8-tetrahydrofolate. Lys231 carries the N6-(pyridoxal phosphate)lysine modification.

Belongs to the SHMT family. Homodimer. It depends on pyridoxal 5'-phosphate as a cofactor.

The protein resides in the cytoplasm. Its pathway is amino-acid biosynthesis; glycine biosynthesis; glycine from L-serine: step 1/1. In terms of biological role, catalyzes the reversible interconversion of serine and glycine with a modified folate serving as the one-carbon carrier. Also exhibits a pteridine-independent aldolase activity toward beta-hydroxyamino acids, producing glycine and aldehydes, via a retro-aldol mechanism. The sequence is that of Serine hydroxymethyltransferase from Picrophilus torridus (strain ATCC 700027 / DSM 9790 / JCM 10055 / NBRC 100828 / KAW 2/3).